Here is a 128-residue protein sequence, read N- to C-terminus: Glycine cleavage system H protein (128 aa).

A Lipoyl-binding domain is found at 24–106 (VYSVGITEHA…YTDGWLFSIK (83 aa)). An N6-lipoyllysine modification is found at Lys65.

The protein belongs to the GcvH family. As to quaternary structure, the glycine cleavage system is composed of four proteins: P, T, L and H. (R)-lipoate is required as a cofactor.

Its function is as follows. The glycine cleavage system catalyzes the degradation of glycine. The H protein shuttles the methylamine group of glycine from the P protein to the T protein. This chain is Glycine cleavage system H protein, found in Yersinia pseudotuberculosis serotype O:1b (strain IP 31758).